A 120-amino-acid chain; its full sequence is U13-lycotoxin-Ls1a (120 aa).

A signal peptide spans 1-16 (MKILFVLISILYAVYC). A propeptide spanning residues 17–54 (FSSEEDVDSAYLANELEPVEDINSEQYAALEPKEEQER) is cleaved from the precursor. 4 cysteine pairs are disulfide-bonded: C56–C70, C63–C76, C69–C87, and C78–C85. In terms of domain architecture, Agouti spans 56–95 (CADMGQDCKDDCDCCLNIATCNCWFGRYFCSCTFGDYQTC).

Belongs to the neurotoxin 05 (agouti) family. Post-translationally, contains 6 disulfide bonds. As to expression, expressed by the venom gland.

The protein resides in the secreted. In Lycosa singoriensis (Wolf spider), this protein is U13-lycotoxin-Ls1a.